Consider the following 152-residue polypeptide: Ribosome maturation factor RimP (152 aa).

The protein belongs to the RimP family.

It is found in the cytoplasm. Functionally, required for maturation of 30S ribosomal subunits. The sequence is that of Ribosome maturation factor RimP from Pseudomonas putida (strain GB-1).